Here is a 494-residue protein sequence, read N- to C-terminus: UDP-N-acetylmuramate--L-alanine ligase (494 aa).

122-128 (GTHGKTT) is an ATP binding site.

It belongs to the MurCDEF family.

The protein localises to the cytoplasm. The catalysed reaction is UDP-N-acetyl-alpha-D-muramate + L-alanine + ATP = UDP-N-acetyl-alpha-D-muramoyl-L-alanine + ADP + phosphate + H(+). It functions in the pathway cell wall biogenesis; peptidoglycan biosynthesis. Functionally, cell wall formation. The polypeptide is UDP-N-acetylmuramate--L-alanine ligase (Mycobacterium bovis (strain ATCC BAA-935 / AF2122/97)).